Reading from the N-terminus, the 59-residue chain is Large ribosomal subunit protein uL30 (59 aa).

Belongs to the universal ribosomal protein uL30 family. Part of the 50S ribosomal subunit.

The sequence is that of Large ribosomal subunit protein uL30 from Leptospira borgpetersenii serovar Hardjo-bovis (strain JB197).